The following is a 440-amino-acid chain: Argininosuccinate lyase (440 aa).

The protein belongs to the lyase 1 family. Argininosuccinate lyase subfamily.

Its subcellular location is the cytoplasm. The catalysed reaction is 2-(N(omega)-L-arginino)succinate = fumarate + L-arginine. It functions in the pathway amino-acid biosynthesis; L-arginine biosynthesis; L-arginine from L-ornithine and carbamoyl phosphate: step 3/3. The protein is Argininosuccinate lyase of Clostridium botulinum (strain Kyoto / Type A2).